Reading from the N-terminus, the 1325-residue chain is Clustered mitochondria protein homolog (1325 aa).

The Clu domain maps to P311–L573. 3 disordered regions span residues K893–T937, D1032–L1063, and Q1245–S1325. Residues S1265–H1275 are compositionally biased toward basic residues. The span at Q1276–P1285 shows a compositional bias: low complexity. Residues A1314 to S1325 are compositionally biased toward basic residues.

Belongs to the CLU family. As to quaternary structure, may associate with the eukaryotic translation initiation factor 3 (eIF-3) complex.

It is found in the cytoplasm. MRNA-binding protein involved in proper cytoplasmic distribution of mitochondria. This Malassezia globosa (strain ATCC MYA-4612 / CBS 7966) (Dandruff-associated fungus) protein is Clustered mitochondria protein homolog.